The sequence spans 55 residues: Large ribosomal subunit protein bL33 (55 aa).

The protein belongs to the bacterial ribosomal protein bL33 family.

In Xanthomonas oryzae pv. oryzae (strain PXO99A), this protein is Large ribosomal subunit protein bL33.